Here is a 206-residue protein sequence, read N- to C-terminus: Venom allergen 5 (206 aa).

Disulfide bonds link Cys5–Cys18, Cys9–Cys103, Cys28–Cys96, and Cys172–Cys189. The SCP domain occupies 47–191 (LKVHNDFRQK…WYTHYLVCNY (145 aa)).

It belongs to the CRISP family. Venom allergen 5-like subfamily. Expressed by the venom gland.

It is found in the secreted. This Vespula vidua (Ground hornet) protein is Venom allergen 5.